The primary structure comprises 192 residues: MPEGEMMHKLQDVIDRKLLDSRRIFFSEPVTEKSATEAIKKLWYLELTNPGQPIVFVINSPGGSVDAGFAVWDQIKMISSPLTTVVTGLAASMGSVLSLCAVPGRRFATPHARIMIHQPSIGGTITGQATDLDIHAREILKTKARIIDVYVEATGQSREVIEKAIDRDMWMSANEAMEFGLLDGILFSFNDL.

The Nucleophile role is filled by Ser92. The active site involves His117.

This sequence belongs to the peptidase S14 family. In terms of assembly, fourteen ClpP subunits assemble into 2 heptameric rings which stack back to back to give a disk-like structure with a central cavity, resembling the structure of eukaryotic proteasomes.

It localises to the cytoplasm. The catalysed reaction is Hydrolysis of proteins to small peptides in the presence of ATP and magnesium. alpha-casein is the usual test substrate. In the absence of ATP, only oligopeptides shorter than five residues are hydrolyzed (such as succinyl-Leu-Tyr-|-NHMec, and Leu-Tyr-Leu-|-Tyr-Trp, in which cleavage of the -Tyr-|-Leu- and -Tyr-|-Trp bonds also occurs).. Functionally, cleaves peptides in various proteins in a process that requires ATP hydrolysis. Has a chymotrypsin-like activity. Plays a major role in the degradation of misfolded proteins. The protein is ATP-dependent Clp protease proteolytic subunit 1 of Chlamydia trachomatis serovar D (strain ATCC VR-885 / DSM 19411 / UW-3/Cx).